Here is a 697-residue protein sequence, read N- to C-terminus: Potassium-transporting ATPase ATP-binding subunit (697 aa).

The next 4 helical transmembrane spans lie at 36 to 56, 66 to 86, 218 to 238, and 253 to 273; these read VMFV…RDLI, LQII…EAVA, IALN…TATI, and VLVA…LSAI. Asp306 (4-aspartylphosphate intermediate) is an active-site residue. Residues Asp343, Glu347, 376 to 383, and Lys394 each bind ATP; that span reads FTAQTRMS. Mg(2+) contacts are provided by Asp526 and Asp530. Helical transmembrane passes span 595-615, 631-651, and 669-689; these read YFAI…QSTG, AILS…PLSL, and LLVY…IIDM.

It belongs to the cation transport ATPase (P-type) (TC 3.A.3) family. Type IA subfamily. The system is composed of three essential subunits: KdpA, KdpB and KdpC.

Its subcellular location is the cell inner membrane. The enzyme catalyses K(+)(out) + ATP + H2O = K(+)(in) + ADP + phosphate + H(+). Functionally, part of the high-affinity ATP-driven potassium transport (or Kdp) system, which catalyzes the hydrolysis of ATP coupled with the electrogenic transport of potassium into the cytoplasm. This subunit is responsible for energy coupling to the transport system and for the release of the potassium ions to the cytoplasm. In Mesorhizobium japonicum (strain LMG 29417 / CECT 9101 / MAFF 303099) (Mesorhizobium loti (strain MAFF 303099)), this protein is Potassium-transporting ATPase ATP-binding subunit.